Reading from the N-terminus, the 385-residue chain is NifS/IcsS protein homolog (385 aa).

Pyridoxal 5'-phosphate-binding positions include 69-70 (GT), Asn149, Gln178, and 199-201 (SSH). Lys202 is subject to N6-(pyridoxal phosphate)lysine. Thr237 provides a ligand contact to pyridoxal 5'-phosphate. The active-site Cysteine persulfide intermediate is Cys325. Residue Cys325 participates in [2Fe-2S] cluster binding.

The protein belongs to the class-V pyridoxal-phosphate-dependent aminotransferase family. NifS/IscS subfamily. Pyridoxal 5'-phosphate is required as a cofactor.

The polypeptide is NifS/IcsS protein homolog (Lactobacillus delbrueckii subsp. bulgaricus (strain ATCC 11842 / DSM 20081 / BCRC 10696 / JCM 1002 / NBRC 13953 / NCIMB 11778 / NCTC 12712 / WDCM 00102 / Lb 14)).